The sequence spans 227 residues: Lysosomal-associated transmembrane protein 4B (227 aa).

4 helical membrane-spanning segments follow: residues 26-46 (ILLG…LLSA), 72-92 (MCIA…ATYG), 100-120 (WIIP…LVAI), and 153-173 (CLVL…GYLI). Positions 205–222 (PPYDDATAVPSTAKEPPP) are required for NEDD4 interaction.

This sequence belongs to the LAPTM4/LAPTM5 transporter family. Homooligomer; upon reaching the lysosomes. Interacts with MCOLN1. Interacts with NEDD4; may play a role in the lysosomal sorting of LAPTM4B; enhances HGS association with NEDD4; mediates inhibition of EGFR degradation. Interacts with PIP5K1C; promotes SNX5 association with LAPTM4B; kinase activity of PIP5K1C is required; interaction is regulated by phosphatidylinositol 4,5-bisphosphate generated by PIP5K1C. Interacts with HGS; promotes HGS ubiquitination. Interacts with SNX5. Interacts with SLC3A2 and SLC7A5; recruits SLC3A2 and SLC7A5 to lysosomes to promote leucine uptake into these organelles and is required for mTORC1 activation. Interacts with LRRC32; decreases TGFB1 production in regulatory T cells. Interacts with BECN1; competes with EGFR for LAPTM4B binding; regulates EGFR activity. Interacts with EGFR; positively correlates with EGFR activation. Post-translationally, undergoes proteolytic cleavage following delivery to the lysosomes. Ubiquitinated by NEDD4.

Its subcellular location is the endomembrane system. The protein localises to the late endosome membrane. It is found in the cell membrane. The protein resides in the cell projection. It localises to the lysosome membrane. Its subcellular location is the endosome membrane. The protein localises to the endosome. It is found in the multivesicular body membrane. The protein resides in the multivesicular body lumen. Its function is as follows. Required for optimal lysosomal function. Blocks EGF-stimulated EGFR intraluminal sorting and degradation. Conversely by binding with the phosphatidylinositol 4,5-bisphosphate, regulates its PIP5K1C interaction, inhibits HGS ubiquitination and relieves LAPTM4B inhibition of EGFR degradation. Recruits SLC3A2 and SLC7A5 (the Leu transporter) to the lysosome, promoting entry of leucine and other essential amino acid (EAA) into the lysosome, stimulating activation of proton-transporting vacuolar (V)-ATPase protein pump (V-ATPase) and hence mTORC1 activation. Plays a role as negative regulator of TGFB1 production in regulatory T cells. Binds ceramide and facilitates its exit from late endosome in order to control cell death pathways. This is Lysosomal-associated transmembrane protein 4B from Mus musculus (Mouse).